The primary structure comprises 428 residues: 3-phosphoshikimate 1-carboxyvinyltransferase (428 aa).

The 3-phosphoshikimate site is built by Lys20, Ser21, and Arg25. Position 20 (Lys20) interacts with phosphoenolpyruvate. Residues Gly92 and Arg120 each contribute to the phosphoenolpyruvate site. Positions 166, 168, 314, and 341 each coordinate 3-phosphoshikimate. A phosphoenolpyruvate-binding site is contributed by Gln168. The active-site Proton acceptor is the Asp314. Phosphoenolpyruvate is bound by residues Arg345 and Arg387.

It belongs to the EPSP synthase family. As to quaternary structure, monomer.

The protein localises to the cytoplasm. It catalyses the reaction 3-phosphoshikimate + phosphoenolpyruvate = 5-O-(1-carboxyvinyl)-3-phosphoshikimate + phosphate. Its pathway is metabolic intermediate biosynthesis; chorismate biosynthesis; chorismate from D-erythrose 4-phosphate and phosphoenolpyruvate: step 6/7. Catalyzes the transfer of the enolpyruvyl moiety of phosphoenolpyruvate (PEP) to the 5-hydroxyl of shikimate-3-phosphate (S3P) to produce enolpyruvyl shikimate-3-phosphate and inorganic phosphate. The protein is 3-phosphoshikimate 1-carboxyvinyltransferase of Listeria innocua serovar 6a (strain ATCC BAA-680 / CLIP 11262).